A 404-amino-acid polypeptide reads, in one-letter code: Cysteine desulfurase IscS (404 aa).

Pyridoxal 5'-phosphate is bound by residues 75-76 (AT), Asn155, Gln183, and 203-205 (SAH). Lys206 carries the N6-(pyridoxal phosphate)lysine modification. Position 243 (Thr243) interacts with pyridoxal 5'-phosphate. Cys328 functions as the Cysteine persulfide intermediate in the catalytic mechanism. Residue Cys328 coordinates [2Fe-2S] cluster.

The protein belongs to the class-V pyridoxal-phosphate-dependent aminotransferase family. NifS/IscS subfamily. Homodimer. Forms a heterotetramer with IscU, interacts with other sulfur acceptors. Pyridoxal 5'-phosphate is required as a cofactor.

It is found in the cytoplasm. The catalysed reaction is (sulfur carrier)-H + L-cysteine = (sulfur carrier)-SH + L-alanine. Its pathway is cofactor biosynthesis; iron-sulfur cluster biosynthesis. In terms of biological role, master enzyme that delivers sulfur to a number of partners involved in Fe-S cluster assembly, tRNA modification or cofactor biosynthesis. Catalyzes the removal of elemental sulfur atoms from cysteine to produce alanine. Functions as a sulfur delivery protein for Fe-S cluster synthesis onto IscU, an Fe-S scaffold assembly protein, as well as other S acceptor proteins. This is Cysteine desulfurase IscS from Pseudomonas putida (strain W619).